A 315-amino-acid polypeptide reads, in one-letter code: Phosphatidylglycerol--prolipoprotein diacylglyceryl transferase (315 aa).

2 helical membrane-spanning segments follow: residues F19–L39 and V93–L113. Residue R141 coordinates a 1,2-diacyl-sn-glycero-3-phospho-(1'-sn-glycerol). 2 consecutive transmembrane segments (helical) span residues L188–I208 and M256–Y276.

The protein belongs to the Lgt family.

The protein localises to the cell membrane. It carries out the reaction L-cysteinyl-[prolipoprotein] + a 1,2-diacyl-sn-glycero-3-phospho-(1'-sn-glycerol) = an S-1,2-diacyl-sn-glyceryl-L-cysteinyl-[prolipoprotein] + sn-glycerol 1-phosphate + H(+). It functions in the pathway protein modification; lipoprotein biosynthesis (diacylglyceryl transfer). Its function is as follows. Catalyzes the transfer of the diacylglyceryl group from phosphatidylglycerol to the sulfhydryl group of the N-terminal cysteine of a prolipoprotein, the first step in the formation of mature lipoproteins. This chain is Phosphatidylglycerol--prolipoprotein diacylglyceryl transferase, found in Bifidobacterium longum subsp. infantis (strain ATCC 15697 / DSM 20088 / JCM 1222 / NCTC 11817 / S12).